The sequence spans 37 residues: Cytochrome b6-f complex subunit 5 (37 aa).

A helical membrane pass occupies residues 5-25 (LLSGIVLGLIPVTLAGLFVTA).

It belongs to the PetG family. In terms of assembly, the 4 large subunits of the cytochrome b6-f complex are cytochrome b6, subunit IV (17 kDa polypeptide, PetD), cytochrome f and the Rieske protein, while the 4 small subunits are PetG, PetL, PetM and PetN. The complex functions as a dimer.

It is found in the plastid. It localises to the chloroplast thylakoid membrane. In terms of biological role, component of the cytochrome b6-f complex, which mediates electron transfer between photosystem II (PSII) and photosystem I (PSI), cyclic electron flow around PSI, and state transitions. PetG is required for either the stability or assembly of the cytochrome b6-f complex. This Chlorokybus atmophyticus (Soil alga) protein is Cytochrome b6-f complex subunit 5.